The primary structure comprises 439 residues: Prenyltransferase iacE (439 aa).

Substrate-binding positions include 88-89 (WI), Glu-97, Arg-112, Lys-198, Tyr-200, Arg-271, Lys-273, and Tyr-275.

The protein belongs to the tryptophan dimethylallyltransferase family.

It carries out the reaction siccayne + dimethylallyl diphosphate = pestalodiol + diphosphate. The protein operates within secondary metabolite biosynthesis. Functionally, prenyltransferase; part of the gene cluster that mediates the biosynthesis of iso-A82775C, a enylepoxycyclohexane and biosynthetic precursor of the chloropestolide anticancer natural products. Within the cluster, the prenyltransferase iacE prenylates siccayne to generate pestalodiol E, using dimethylallyl diphosphate (DMAPP) as cosubstrate. The probable oxidoreductase iacF is then involved in the epoxidation of pestalodiol F to pestalodiol F, which is further converted to pestalofone A by the short-chain dehydrogenase/reductase iacG. Iso-A82775C is subsequently generated from pestalofone A by the short-chain dehydrogenase/reductase iacC. Iso-A82775C is further condensed with maldoxin via a Diels-Alder reaction to produce the anticancer natural products chloropestolides A to E. The chain is Prenyltransferase iacE from Pestalotiopsis fici (strain W106-1 / CGMCC3.15140).